An 804-amino-acid polypeptide reads, in one-letter code: DNA gyrase subunit B (804 aa).

Residues 431 to 546 (CEMYIVEGDS…NGCVYIAQPP (116 aa)) form the Toprim domain. Residues glutamate 437, aspartate 511, and aspartate 513 each coordinate Mg(2+).

It belongs to the type II topoisomerase GyrB family. As to quaternary structure, heterotetramer, composed of two GyrA and two GyrB chains. In the heterotetramer, GyrA contains the active site tyrosine that forms a transient covalent intermediate with DNA, while GyrB binds cofactors and catalyzes ATP hydrolysis. The cofactor is Mg(2+). It depends on Mn(2+) as a cofactor. Ca(2+) serves as cofactor.

The protein resides in the cytoplasm. It catalyses the reaction ATP-dependent breakage, passage and rejoining of double-stranded DNA.. Functionally, a type II topoisomerase that negatively supercoils closed circular double-stranded (ds) DNA in an ATP-dependent manner to modulate DNA topology and maintain chromosomes in an underwound state. Negative supercoiling favors strand separation, and DNA replication, transcription, recombination and repair, all of which involve strand separation. Also able to catalyze the interconversion of other topological isomers of dsDNA rings, including catenanes and knotted rings. Type II topoisomerases break and join 2 DNA strands simultaneously in an ATP-dependent manner. The chain is DNA gyrase subunit B from Chlamydia muridarum (strain MoPn / Nigg).